The following is a 241-amino-acid chain: MIILSTNDNLTNPYEIARYIKEAKKSTPVRAYIQGNIEIEETEELEVYGCDNFKIVFGELDVVEKLIEANEDKIKHYRLEYDRRNSAIPLLDIKHLDARIEPGAIIRDKVKIGKNAVIMMGAVINIGAEIGENSMIDMNAVIGARGIIGKNVHVGAGAVIAGVLEPPSSVPVVLEDNVLVGANAVILEGVRVGHGAVVAAGSVVTEDVPPNTVVAGVPAKIVKIVDDKTREKTKLMEDLRG.

This sequence belongs to the transferase hexapeptide repeat family. DapH subfamily.

It carries out the reaction (S)-2,3,4,5-tetrahydrodipicolinate + acetyl-CoA + H2O = L-2-acetamido-6-oxoheptanedioate + CoA. Its pathway is amino-acid biosynthesis; L-lysine biosynthesis via DAP pathway; LL-2,6-diaminopimelate from (S)-tetrahydrodipicolinate (acetylase route): step 1/3. Functionally, catalyzes the transfer of an acetyl group from acetyl-CoA to tetrahydrodipicolinate. The sequence is that of 2,3,4,5-tetrahydropyridine-2,6-dicarboxylate N-acetyltransferase from Thermoanaerobacter sp. (strain X514).